The primary structure comprises 315 residues: DNA-directed RNA polymerase subunit alpha (315 aa).

The segment at 1 to 228 is alpha N-terminal domain (alpha-NTD); it reads MLEIEKPKIE…EHFKLFMTLT (228 aa). The tract at residues 245 to 315 is alpha C-terminal domain (alpha-CTD); the sequence is KEKVLEMTIE…LELGLKQSEE (71 aa).

This sequence belongs to the RNA polymerase alpha chain family. In terms of assembly, homodimer. The RNAP catalytic core consists of 2 alpha, 1 beta, 1 beta' and 1 omega subunit. When a sigma factor is associated with the core the holoenzyme is formed, which can initiate transcription.

The catalysed reaction is RNA(n) + a ribonucleoside 5'-triphosphate = RNA(n+1) + diphosphate. Its function is as follows. DNA-dependent RNA polymerase catalyzes the transcription of DNA into RNA using the four ribonucleoside triphosphates as substrates. The chain is DNA-directed RNA polymerase subunit alpha from Clostridium tetani (strain Massachusetts / E88).